A 142-amino-acid polypeptide reads, in one-letter code: Transcription antitermination protein NusB (142 aa).

It belongs to the NusB family.

Its function is as follows. Involved in transcription antitermination. Required for transcription of ribosomal RNA (rRNA) genes. Binds specifically to the boxA antiterminator sequence of the ribosomal RNA (rrn) operons. This chain is Transcription antitermination protein NusB, found in Streptococcus mutans serotype c (strain ATCC 700610 / UA159).